The chain runs to 310 residues: Junctional adhesion molecule C (310 aa).

Positions 1–29 are cleaved as a signal peptide; the sequence is MALSRRLRLRLYARLPDFFLLLLFRGCMI. At 30–241 the chain is on the extracellular side; it reads EAVNLKSSNR…GQDMEVYDLN (212 aa). Residues 35–127 enclose the Ig-like V-type domain; it reads KSSNRNPVVH…VALNDRKEVD (93 aa). 2 cysteine pairs are disulfide-bonded: Cys-53–Cys-115 and Cys-160–Cys-219. N-linked (GlcNAc...) asparagine glycans are attached at residues Asn-104 and Asn-192. Residues 139-236 form the Ig-like C2-type domain; it reads PVTPVCRIPA…AARCEGQDME (98 aa). A helical membrane pass occupies residues 242 to 262; the sequence is IAGIIGGVLVVLIVLAVITMG. At 263–310 the chain is on the cytoplasmic side; the sequence is ICCAYRRGCFISSKQDGESYKSPGKHDGVNYIRTSEEGDFRHKSSFVI. S-palmitoyl cysteine attachment occurs at residues Cys-264 and Cys-265.

The protein belongs to the immunoglobulin superfamily. In terms of assembly, interacts with ITGAM. Interacts with GORASP2. In terms of processing, proteolytically cleaved from endothelial cells surface into a soluble form by ADAM10 and ADAM17; the release of soluble JAM3 is increased by pro-inflammatory factors. N-glycosylated. Post-translationally, S-palmitoylated by ZDHHC7. S-palmitoylation promotes expression at tight junctions. Colocalizes with Jam2 near the lumen of seminiferous tubulues. Detected at junctional plaques that correspond to cell-cell contacts between spermatids and Sertoli cells. Detected on endothelial cells, in brain vessels and kidney glomeruli (at protein level). Detected in heart, lung, liver, kidney, testis, thymus, lymph node and Peyer patch. Endothelial cells.

It is found in the cell membrane. The protein resides in the cell junction. It localises to the desmosome. The protein localises to the tight junction. Its subcellular location is the secreted. Its function is as follows. Junctional adhesion protein that mediates heterotypic cell-cell interactions with its cognate receptor JAM2 to regulate different cellular processes. Plays a role in homing and mobilization of hematopoietic stem and progenitor cells within the bone marrow. At the surface of bone marrow stromal cells, it contributes to the retention of the hematopoietic stem and progenitor cells expressing JAM3. Plays a central role in leukocytes extravasation by facilitating transmigration through the endothelium. Plays a role in spermatogenesis where JAM2 and JAM3, which are respectively expressed by Sertoli and germ cells, mediate an interaction between both cell types and play an essential role in the anchorage of germ cells onto Sertoli cells and the assembly of cell polarity complexes during spermatid differentiation. Also functions as a counter-receptor for ITGAM, mediating leukocyte-platelet interactions and is involved in the regulation of transepithelial migration of polymorphonuclear neutrophils (PMN). Plays a role in angiogenesis. Plays a role in the regulation of cell migration. During myogenesis, it is involved in myocyte fusion. In terms of biological role, promotes chemotaxis of vascular endothelial cells and stimulates angiogenesis. This Mus musculus (Mouse) protein is Junctional adhesion molecule C (Jam3).